The chain runs to 438 residues: 3-phosphoshikimate 1-carboxyvinyltransferase (438 aa).

Positions 26, 27, and 31 each coordinate 3-phosphoshikimate. Lys26 provides a ligand contact to phosphoenolpyruvate. Residues Gly99 and Arg127 each contribute to the phosphoenolpyruvate site. 6 residues coordinate 3-phosphoshikimate: Ser170, Ser171, Gln172, Ser199, Glu314, and His343. Residue Gln172 participates in phosphoenolpyruvate binding. Glu314 (proton acceptor) is an active-site residue. Phosphoenolpyruvate is bound by residues Arg347, Arg388, and Lys413.

This sequence belongs to the EPSP synthase family. As to quaternary structure, monomer.

It localises to the cytoplasm. It carries out the reaction 3-phosphoshikimate + phosphoenolpyruvate = 5-O-(1-carboxyvinyl)-3-phosphoshikimate + phosphate. Its pathway is metabolic intermediate biosynthesis; chorismate biosynthesis; chorismate from D-erythrose 4-phosphate and phosphoenolpyruvate: step 6/7. Functionally, catalyzes the transfer of the enolpyruvyl moiety of phosphoenolpyruvate (PEP) to the 5-hydroxyl of shikimate-3-phosphate (S3P) to produce enolpyruvyl shikimate-3-phosphate and inorganic phosphate. The polypeptide is 3-phosphoshikimate 1-carboxyvinyltransferase (Mycobacterium sp. (strain JLS)).